Consider the following 139-residue polypeptide: Putative pre-16S rRNA nuclease (139 aa).

This sequence belongs to the YqgF nuclease family.

The protein resides in the cytoplasm. Could be a nuclease involved in processing of the 5'-end of pre-16S rRNA. The sequence is that of Putative pre-16S rRNA nuclease from Haemophilus influenzae (strain PittEE).